Consider the following 332-residue polypeptide: Ribosomal RNA small subunit methyltransferase H (332 aa).

S-adenosyl-L-methionine contacts are provided by residues 36-38, D54, F81, D102, and Q109; that span reads GGY. Positions 297 to 318 are disordered; the sequence is ARSAKLRGAERTEAPAHAAGDL.

This sequence belongs to the methyltransferase superfamily. RsmH family.

The protein localises to the cytoplasm. The enzyme catalyses cytidine(1402) in 16S rRNA + S-adenosyl-L-methionine = N(4)-methylcytidine(1402) in 16S rRNA + S-adenosyl-L-homocysteine + H(+). Its function is as follows. Specifically methylates the N4 position of cytidine in position 1402 (C1402) of 16S rRNA. This Rhodopseudomonas palustris (strain TIE-1) protein is Ribosomal RNA small subunit methyltransferase H.